The sequence spans 430 residues: RNA pseudouridine synthase 2, chloroplastic (430 aa).

The N-terminal 43 residues, 1 to 43 (MLSISQLPSFSLTTAKSLRYPSSPSSSLSIFFSFFPKVSNFVR), are a transit peptide targeting the chloroplast. The S4 RNA-binding domain occupies 82–155 (IRLDSWISSR…IPLDIVYEDK (74 aa)). Residues 195 to 222 (SNSEEDDDSDEETFSDDEEMTTSPSSYA) form a disordered region. Acidic residues predominate over residues 196–214 (NSEEDDDSDEETFSDDEEM). Residue aspartate 234 is part of the active site.

It belongs to the pseudouridine synthase RluA family.

Its subcellular location is the plastid. It localises to the chloroplast. It catalyses the reaction a uridine in RNA = a pseudouridine in RNA. The polypeptide is RNA pseudouridine synthase 2, chloroplastic (Arabidopsis thaliana (Mouse-ear cress)).